The chain runs to 395 residues: Serine-type anaerobic sulfatase-maturating enzyme (395 aa).

One can recognise a Radical SAM core domain in the interval 18–249 (PRSPVPFHIL…QWRKRCDRGR (232 aa)). [4Fe-4S] cluster-binding residues include C35 and C39. Residue Y41 participates in S-adenosyl-L-methionine binding. Position 42 (C42) interacts with [4Fe-4S] cluster. Positions 84 and 152 each coordinate S-adenosyl-L-methionine. Positions 270, 276, and 291 each coordinate [4Fe-4S] cluster. D292 functions as the Proton acceptor in the catalytic mechanism. Positions 331, 334, 340, 344, and 357 each coordinate [4Fe-4S] cluster.

This sequence belongs to the radical SAM superfamily. Anaerobic sulfatase-maturating enzyme family. As to quaternary structure, monomer. Interacts with AtsA prior to its export to the periplasm. This interaction depends on the presence of AtsA 'Ser-72'. Binding of SAM to AtsB promotes the formation of a ternary AtsA-AtsB-SAM complex. [4Fe-4S] cluster serves as cofactor.

It localises to the cytoplasm. It catalyses the reaction L-seryl-[sulfatase] + S-adenosyl-L-methionine = 3-oxo-L-alanyl-[sulfatase] + 5'-deoxyadenosine + L-methionine + H(+). The protein operates within protein modification; sulfatase oxidation. Activity is inhibited by iron chelators. Its function is as follows. Involved in 'Ser-type' sulfatase maturation under anaerobic conditions. Catalyzes the post-translational modification of serine ('Ser-72' in the arylsulfatase AtsA) into 3-oxoalanine (also known as C(alpha)-formylglycine (FGly)), by a free radical chemical mechanism initiated via the reductive cleavage of S-adenosyl-L-methionine (SAM). Is capable of catalyzing multiple turnovers. In vitro, use of a peptide substrate in which the target serine is changed to cysteine also gives rise to turnover, supporting approximately 4-fold the activity of that observed with the natural substrate. In Klebsiella pneumoniae, this protein is Serine-type anaerobic sulfatase-maturating enzyme.